Consider the following 555-residue polypeptide: Genome polyprotein (555 aa).

The Extracellular portion of the chain corresponds to 1-7; that stretch reads KHAQRIE. Residues 8–28 traverse the membrane as a helical segment; that stretch reads TWILRHPGFTIMAAILAYTIG. At 29–34 the chain is on the cytoplasmic side; that stretch reads TTHFQR. Residues 35–49 traverse the membrane as a helical segment; it reads ALIFILLTAVAPSMT. Topologically, residues 50–494 are extracellular; sequence MRCIGISNRD…LHQVFGAIYG (445 aa). 4 disulfides stabilise this stretch: cysteine 52–cysteine 79, cysteine 109–cysteine 170, cysteine 123–cysteine 154, and cysteine 141–cysteine 165. An N-linked (GlcNAc...) asparagine; by host glycan is attached at asparagine 116. Residues 147 to 160 form a fusion peptide region; that stretch reads DRGWGNGCGLFGKG. A glycan (N-linked (GlcNAc...) asparagine; by host) is linked at asparagine 202. 2 disulfide bridges follow: cysteine 234-cysteine 334 and cysteine 351-cysteine 382. Residues 495 to 515 traverse the membrane as a helical segment; sequence AAFSGVSWTMKILIGVIITWI. Residues 516-521 lie on the Cytoplasmic side of the membrane; that stretch reads GMNSRS. The helical transmembrane segment at 522-542 threads the bilayer; that stretch reads TSLSVSLVLVGIVTLYLEVMV. Over 543-555 the chain is Extracellular; it reads QADSGCVVSWKNK.

In terms of assembly, homodimer; in the endoplasmic reticulum and Golgi. Interacts with protein prM. Interacts with non-structural protein 1. As to quaternary structure, homodimer; Homohexamer when secreted. Interacts with envelope protein E. In terms of processing, N-glycosylated. N-glycosylated. The excreted form is glycosylated and this is required for efficient secretion of the protein from infected cells. Post-translationally, specific enzymatic cleavages in vivo yield mature proteins. Cleavages in the lumen of endoplasmic reticulum are performed by host signal peptidase, wereas cleavages in the cytoplasmic side are performed by serine protease NS3. Signal cleavage at the 2K-4B site requires a prior NS3 protease-mediated cleavage at the 4A-2K site.

The protein localises to the virion membrane. Its subcellular location is the host endoplasmic reticulum membrane. It is found in the secreted. In terms of biological role, may play a role in virus budding. Exerts cytotoxic effects by activating a mitochondrial apoptotic pathway through M ectodomain. May display a viroporin activity. Its function is as follows. Binds to host cell surface receptor and mediates fusion between viral and cellular membranes. Envelope protein is synthesized in the endoplasmic reticulum in the form of heterodimer with protein prM. They play a role in virion budding in the ER, and the newly formed immature particle is covered with 60 spikes composed of heterodimer between precursor prM and envelope protein E. The virion is transported to the Golgi apparatus where the low pH causes dissociation of PrM-E heterodimers and formation of E homodimers. prM-E cleavage is inefficient, and many virions are only partially matured. These uncleaved prM would play a role in immune evasion. Involved in immune evasion, pathogenesis and viral replication. Once cleaved off the polyprotein, is targeted to three destinations: the viral replication cycle, the plasma membrane and the extracellular compartment. Essential for viral replication. Required for formation of the replication complex and recruitment of other non-structural proteins to the ER-derived membrane structures. Excreted as a hexameric lipoparticle that plays a role against host immune response. Antagonizing the complement function. Binds to the host macrophages and dendritic cells. Inhibits signal transduction originating from Toll-like receptor 3 (TLR3). Functionally, disrupts the host endothelial glycocalyx layer of host pulmonary microvascular endothelial cells, inducing degradation of sialic acid and shedding of heparan sulfate proteoglycans. NS1 induces expression of sialidases, heparanase, and activates cathepsin L, which activates heparanase via enzymatic cleavage. These effects are probably linked to the endothelial hyperpermeability observed in severe dengue disease. This Dengue virus type 2 (strain Thailand/TH-36/1958) (DENV-2) protein is Genome polyprotein.